A 328-amino-acid chain; its full sequence is Cytochrome c biogenesis protein CcsA (328 aa).

The next 8 helical transmembrane spans lie at 12 to 32 (HISF…LLLG), 45 to 65 (GMII…IFSG), 72 to 92 (LYES…VLCL), 100 to 120 (FNTI…SGLL), 145 to 165 (MILG…ILVI), 234 to 254 (TISL…VWAN), 263 to 283 (WDPK…YLHI), and 296 to 316 (IVAS…NLLG).

The protein belongs to the CcmF/CycK/Ccl1/NrfE/CcsA family. As to quaternary structure, may interact with Ccs1.

It localises to the plastid. It is found in the chloroplast thylakoid membrane. Required during biogenesis of c-type cytochromes (cytochrome c6 and cytochrome f) at the step of heme attachment. The protein is Cytochrome c biogenesis protein CcsA of Phaseolus vulgaris (Kidney bean).